Reading from the N-terminus, the 439-residue chain is Microfibrillar-associated protein 1 (439 aa).

Disordered stretches follow at residues 1 to 27 (MSVP…NEKG) and 39 to 200 (YVSG…PRLK). N-acetylserine is present on serine 2. Phosphoserine is present on residues serine 52 and serine 53. Residues 61–70 (QFIKKAKEQE) show a composition bias toward basic and acidic residues. Lysine 67 participates in a covalent cross-link: Glycyl lysine isopeptide (Lys-Gly) (interchain with G-Cter in SUMO2). Positions 71 to 81 (AEPEEQEEDSS) are enriched in acidic residues. A phosphoserine mark is found at serine 94, serine 116, serine 118, serine 132, and serine 133. Composition is skewed to acidic residues over residues 112-122 (VVGESDSEVEG) and 131-144 (DSSE…DDEE). The segment covering 145 to 163 (IERRRGMMRQRAQERKNEE) has biased composition (basic and acidic residues). The segment covering 178 to 195 (ESESESEYEEYTDSEDEM) has biased composition (acidic residues). Lysine 249 is covalently cross-linked (Glycyl lysine isopeptide (Lys-Gly) (interchain with G-Cter in SUMO2)). Threonine 267 carries the phosphothreonine modification. Lysine 357 is covalently cross-linked (Glycyl lysine isopeptide (Lys-Gly) (interchain with G-Cter in SUMO2)). The residue at position 361 (serine 361) is a Phosphoserine. Glycyl lysine isopeptide (Lys-Gly) (interchain with G-Cter in SUMO2) cross-links involve residues lysine 371, lysine 381, lysine 415, and lysine 418. Residue serine 432 is modified to Phosphoserine.

It belongs to the MFAP1 family. Component of the spliceosome B complex. Interacts with PRPF38A (via N-terminal interaction domain).

The protein resides in the nucleus. Functionally, involved in pre-mRNA splicing as a component of the spliceosome. The chain is Microfibrillar-associated protein 1 from Homo sapiens (Human).